The primary structure comprises 169 residues: 2-C-methyl-D-erythritol 2,4-cyclodiphosphate synthase (169 aa).

Residues D13 and H15 each coordinate a divalent metal cation. 4-CDP-2-C-methyl-D-erythritol 2-phosphate is bound by residues 13–15 and 40–41; these read DIH and HS. An a divalent metal cation-binding site is contributed by H48. Residues 62–64, 138–141, and R148 contribute to the 4-CDP-2-C-methyl-D-erythritol 2-phosphate site; these read DIG and TTNE.

The protein belongs to the IspF family. As to quaternary structure, homotrimer. A divalent metal cation is required as a cofactor.

It carries out the reaction 4-CDP-2-C-methyl-D-erythritol 2-phosphate = 2-C-methyl-D-erythritol 2,4-cyclic diphosphate + CMP. It participates in isoprenoid biosynthesis; isopentenyl diphosphate biosynthesis via DXP pathway; isopentenyl diphosphate from 1-deoxy-D-xylulose 5-phosphate: step 4/6. Functionally, involved in the biosynthesis of isopentenyl diphosphate (IPP) and dimethylallyl diphosphate (DMAPP), two major building blocks of isoprenoid compounds. Catalyzes the conversion of 4-diphosphocytidyl-2-C-methyl-D-erythritol 2-phosphate (CDP-ME2P) to 2-C-methyl-D-erythritol 2,4-cyclodiphosphate (ME-CPP) with a corresponding release of cytidine 5-monophosphate (CMP). This is 2-C-methyl-D-erythritol 2,4-cyclodiphosphate synthase from Akkermansia muciniphila (strain ATCC BAA-835 / DSM 22959 / JCM 33894 / BCRC 81048 / CCUG 64013 / CIP 107961 / Muc).